A 223-amino-acid polypeptide reads, in one-letter code: Probable transaldolase (223 aa).

Lys-92 serves as the catalytic Schiff-base intermediate with substrate.

The protein belongs to the transaldolase family. Type 3B subfamily.

Its subcellular location is the cytoplasm. The enzyme catalyses D-sedoheptulose 7-phosphate + D-glyceraldehyde 3-phosphate = D-erythrose 4-phosphate + beta-D-fructose 6-phosphate. It participates in carbohydrate degradation; pentose phosphate pathway; D-glyceraldehyde 3-phosphate and beta-D-fructose 6-phosphate from D-ribose 5-phosphate and D-xylulose 5-phosphate (non-oxidative stage): step 2/3. In terms of biological role, transaldolase is important for the balance of metabolites in the pentose-phosphate pathway. This chain is Probable transaldolase, found in Thermus thermophilus (strain ATCC 27634 / DSM 579 / HB8).